The chain runs to 228 residues: MKSTRPFHPTPVITIDGPTASGKGTVAALVAAHLGFHLLDSGALYRLAALASIRYQVEPNDADALAKLVDGLHITFREGCAQLDGVDVSDEIRAEAVGNRASAIAVHAPVRAALVARQRAFRKTPGLVADGRDMGTVIFPDAVLKVFLTASVEARAARRHKQLMQKGFSANMDNLLQDLRERDARDSNRAAAPLKPAADAKPLDTSALTIEQSVEQVLAWYRELGQPA.

Position 17-25 (17-25 (GPTASGKGT)) interacts with ATP.

This sequence belongs to the cytidylate kinase family. Type 1 subfamily.

The protein resides in the cytoplasm. It catalyses the reaction CMP + ATP = CDP + ADP. The catalysed reaction is dCMP + ATP = dCDP + ADP. In Burkholderia thailandensis (strain ATCC 700388 / DSM 13276 / CCUG 48851 / CIP 106301 / E264), this protein is Cytidylate kinase.